The chain runs to 299 residues: Lathosterol oxidase (299 aa).

The next 3 helical transmembrane spans lie at 32–52 (ISLL…CATL), 79–99 (FTVQ…LLEI), and 117–137 (FELV…IYWI). In terms of domain architecture, Fatty acid hydroxylase spans 124-252 (ISFLFFTDMF…YFTLWDRIGG (129 aa)). Positions 138–143 (HRGLHH) match the Histidine box-1 motif. Residues 151–155 (HKPHH) carry the Histidine box-2 motif. A helical transmembrane segment spans residues 186 to 206 (IFPLHKVVYLSLYILVNIWTI). Residues 228–233 (HHTDHH) carry the Histidine box-3 motif. Ser-253 carries the phosphoserine modification. The segment at 274–299 (EGKRSSHSGNGCKNEKLFNGEFTKTE) is disordered. Positions 286–299 (KNEKLFNGEFTKTE) are enriched in basic and acidic residues.

It belongs to the sterol desaturase family. The cofactor is Fe cation.

Its subcellular location is the endoplasmic reticulum membrane. The enzyme catalyses a Delta(7)-sterol + 2 Fe(II)-[cytochrome b5] + O2 + 2 H(+) = a Delta(5),Delta(7)-sterol + 2 Fe(III)-[cytochrome b5] + 2 H2O. It carries out the reaction lathosterol + 2 Fe(II)-[cytochrome b5] + O2 + 2 H(+) = 7-dehydrocholesterol + 2 Fe(III)-[cytochrome b5] + 2 H2O. It catalyses the reaction 5alpha-cholesta-7,24-dien-3beta-ol + 2 Fe(II)-[cytochrome b5] + O2 + 2 H(+) = 7-dehydrodesmosterol + 2 Fe(III)-[cytochrome b5] + 2 H2O. The protein operates within steroid biosynthesis; cholesterol biosynthesis. In terms of biological role, catalyzes the penultimate step of the biosynthesis of cholesterol, the dehydrogenation of lathosterol into 7-dehydrocholesterol (7-DHC). Cholesterol is the major sterol component in mammalian membranes and a precursor for bile acid and steroid hormone synthesis. In addition to its essential role in cholesterol biosynthesis, it also indirectly regulates ferroptosis through the production of 7-DHC. By diverting the spread of damage caused by peroxyl radicals from the phospholipid components to its sterol nucleus, 7-DHC prevents this form of cell death. The chain is Lathosterol oxidase from Homo sapiens (Human).